The chain runs to 356 residues: Methionine import ATP-binding protein MetN (356 aa).

The region spanning 7-250 (IKLDNIDVTF…PRESLTQDFI (244 aa)) is the ABC transporter domain. 43–50 (GYSGAGKS) provides a ligand contact to ATP.

It belongs to the ABC transporter superfamily. Methionine importer (TC 3.A.1.24) family. In terms of assembly, the complex is composed of two ATP-binding proteins (MetN), two transmembrane proteins (MetI) and a solute-binding protein (MetQ).

The protein resides in the cell membrane. It catalyses the reaction L-methionine(out) + ATP + H2O = L-methionine(in) + ADP + phosphate + H(+). It carries out the reaction D-methionine(out) + ATP + H2O = D-methionine(in) + ADP + phosphate + H(+). Its function is as follows. Part of the ABC transporter complex MetNIQ involved in methionine import. Responsible for energy coupling to the transport system. This Streptococcus agalactiae serotype III (strain NEM316) protein is Methionine import ATP-binding protein MetN.